The following is a 282-amino-acid chain: ATP synthase gamma chain (282 aa).

The protein belongs to the ATPase gamma chain family. As to quaternary structure, F-type ATPases have 2 components, CF(1) - the catalytic core - and CF(0) - the membrane proton channel. CF(1) has five subunits: alpha(3), beta(3), gamma(1), delta(1), epsilon(1). CF(0) has three main subunits: a, b and c.

It is found in the cell membrane. In terms of biological role, produces ATP from ADP in the presence of a proton gradient across the membrane. The gamma chain is believed to be important in regulating ATPase activity and the flow of protons through the CF(0) complex. The sequence is that of ATP synthase gamma chain from Clostridium botulinum (strain Kyoto / Type A2).